The following is a 259-amino-acid chain: uncharacterized protein (259 aa).

Glu46 is a catalytic residue.

The protein belongs to the PhzF family.

This is an uncharacterized protein from Pseudomonas aeruginosa (strain ATCC 15692 / DSM 22644 / CIP 104116 / JCM 14847 / LMG 12228 / 1C / PRS 101 / PAO1).